The chain runs to 1976 residues: Myosin-10 (1976 aa).

The residue at position 18 (Arg-18) is an Omega-N-methylarginine. The 51-residue stretch at 31–81 (TAKKLVWIPSERHGFEAASIKEERGDEVMVELAENGKKAMVNKDDIQKMNP) folds into the Myosin N-terminal SH3-like domain. The region spanning 85-783 (SKVEDMAELT…VLAHLEEERD (699 aa)) is the Myosin motor domain. 178 to 185 (GESGAGKT) is a binding site for ATP. Lys-442 carries the N6-acetyllysine modification. The actin-binding stretch occupies residues 661 to 683 (LTKLMATLRNTNPNFVRCIIPNH). The region spanning 786 to 815 (ITDIIIFFQAVCRGYLARKAFAKKQQQLSA) is the IQ domain. The stretch at 845 to 1976 (LQVTRQEEEL…VNDTQPPQSE (1132 aa)) forms a coiled coil. The disordered stretch occupies residues 1125–1175 (EDFESEKASRNKAEKQKRDLSEELEALKTELEDTLDTTAAQQELRTKREQE). The segment covering 1129 to 1155 (SEKASRNKAEKQKRDLSEELEALKTEL) has biased composition (basic and acidic residues). At Ser-1145 the chain carries Phosphoserine. N6-acetyllysine is present on residues Lys-1241, Lys-1301, and Lys-1645. Disordered regions lie at residues 1697–1718 (ASSERARRHAEQERDELADEIA) and 1874–1976 (KANA…PQSE). Positions 1698 to 1708 (SSERARRHAEQ) are enriched in basic and acidic residues. Arg-1930 carries the post-translational modification Omega-N-methylarginine. 4 positions are modified to phosphoserine: Ser-1935, Ser-1937, Ser-1938, and Ser-1939. Residue Arg-1940 is modified to Omega-N-methylarginine. 2 positions are modified to phosphoserine: Ser-1952 and Ser-1956. A Phosphothreonine modification is found at Thr-1960. Positions 1967 to 1976 (VNDTQPPQSE) are enriched in polar residues. Ser-1975 carries the post-translational modification Phosphoserine.

Belongs to the TRAFAC class myosin-kinesin ATPase superfamily. Myosin family. In terms of assembly, myosin is a hexameric protein that consists of 2 heavy chain subunits (MHC), 2 alkali light chain subunits (MLC) and 2 regulatory light chain subunits (MLC-2). Interacts with PLEKHG6. Interacts with ECPAS. Interacts with LARP6. Interacts with MCC. Interacts with KIF26B. Interacts with CFAP95. Phosphorylated by ABL2. As to expression, in newborn kidney, expressed in the mesenchyme and ureteric buds.

It localises to the cell projection. The protein localises to the lamellipodium. In terms of biological role, involved with LARP6 in the stabilization of type I collagen mRNAs for CO1A1 and CO1A2. During cell spreading, plays an important role in cytoskeleton reorganization, focal contacts formation (in the central part but not the margins of spreading cells), and lamellipodial extension; this function is mechanically antagonized by MYH9. Cellular myosin that appears to play a role in cytokinesis, cell shape, and specialized functions such as secretion and capping. The chain is Myosin-10 (Myh10) from Mus musculus (Mouse).